The chain runs to 413 residues: MFRLSDFNYHDKVIFLRADLNSPVKDGKIISDARFRAVLHTIRYLLEHKAKVVIGTHQSKPYEEDYLTTEQHAEILSSLLGVKVKYVDDIFGKCARDAIKALKPSEVLMLENLRFAAEETKQNPLEYCERTHFVRKLSPLIDYVVNEAFAAAHRSQPSLVGFARIRPMIPGFLMEKEIKALTRAYESLERPKIYVLGGAKVEDSLNVAENVLRNEKADLILTGGLVGHVFTLAKGFDLGDANISFLDEKGLIKLVDRAEIILNEFYPYIRTPVDFAVEYKGERVEIDLLSDKQWIFDERPILDIGSRTIEKYSEILKEASIIVANGPMGVFEIEEFAKGTVEVFKAIGESKAFSIVGGGHSIASIYQYNIKGISHISTGGGAMLTFFAGQSLPVLQALKISYEKFKNKKELNQ.

Substrate contacts are provided by residues 19–21, R34, 57–60, R114, and R154; these read DLN and HQSK. ATP is bound by residues E332 and 358 to 361; that span reads GGHS.

The protein belongs to the phosphoglycerate kinase family. Monomer.

The protein resides in the cytoplasm. The enzyme catalyses (2R)-3-phosphoglycerate + ATP = (2R)-3-phospho-glyceroyl phosphate + ADP. Its pathway is carbohydrate degradation; glycolysis; pyruvate from D-glyceraldehyde 3-phosphate: step 2/5. The protein is Phosphoglycerate kinase of Thermococcus sibiricus (strain DSM 12597 / MM 739).